The sequence spans 173 residues: Protein GrpE (173 aa).

A compositionally biased stretch (basic and acidic residues) spans 1–20 (MQDEFKTDTPRTEAGSEKET). The segment at 1-23 (MQDEFKTDTPRTEAGSEKETMPS) is disordered.

Belongs to the GrpE family. As to quaternary structure, homodimer.

It is found in the cytoplasm. Participates actively in the response to hyperosmotic and heat shock by preventing the aggregation of stress-denatured proteins, in association with DnaK and GrpE. It is the nucleotide exchange factor for DnaK and may function as a thermosensor. Unfolded proteins bind initially to DnaJ; upon interaction with the DnaJ-bound protein, DnaK hydrolyzes its bound ATP, resulting in the formation of a stable complex. GrpE releases ADP from DnaK; ATP binding to DnaK triggers the release of the substrate protein, thus completing the reaction cycle. Several rounds of ATP-dependent interactions between DnaJ, DnaK and GrpE are required for fully efficient folding. The sequence is that of Protein GrpE from Thiobacillus denitrificans (strain ATCC 25259 / T1).